Reading from the N-terminus, the 479-residue chain is Anaerobic nitric oxide reductase flavorubredoxin (479 aa).

Residues 30-210 (LRGSSYNSYL…PFSRLVTPKI (181 aa)) are zinc metallo-hydrolase. Residues H79, E81, D83, H147, D166, and H227 each contribute to the Fe cation site. Residues 254–393 (ITIFYDTMSN…LCREHGREIA (140 aa)) enclose the Flavodoxin-like domain. FMN is bound by residues 260-264 (TMSNN) and 342-369 (AFGS…EMSL). One can recognise a Rubredoxin-like domain in the interval 423-474 (GPRMQCSVCQWIYDPAKGEPMQDVAPGTPWSEVPDNFLCPECSLGKDVFDEL). Residues C428, C431, C461, and C464 each coordinate Fe cation.

It in the N-terminal section; belongs to the zinc metallo-hydrolase group 3 family. As to quaternary structure, homotetramer. It depends on Fe cation as a cofactor. The cofactor is FMN.

It is found in the cytoplasm. It participates in nitrogen metabolism; nitric oxide reduction. Functionally, anaerobic nitric oxide reductase; uses NADH to detoxify nitric oxide (NO), protecting several 4Fe-4S NO-sensitive enzymes. Has at least 2 reductase partners, only one of which (NorW, flavorubredoxin reductase) has been identified. NO probably binds to the di-iron center; electrons enter from the NorW at rubredoxin and are transferred sequentially to the FMN center and the di-iron center. Also able to function as an aerobic oxygen reductase. This is Anaerobic nitric oxide reductase flavorubredoxin from Shigella flexneri serotype 5b (strain 8401).